A 448-amino-acid polypeptide reads, in one-letter code: Bifunctional protein GlmU (448 aa).

The tract at residues 1 to 230 (MRSCLSIVLA…FDNIVGINNC (230 aa)) is pyrophosphorylase. Residues 9 to 12 (LAAG), lysine 23, glutamine 76, and 81 to 82 (GT) each bind UDP-N-acetyl-alpha-D-glucosamine. Aspartate 106 lines the Mg(2+) pocket. Glycine 142, glutamate 156, asparagine 171, and asparagine 228 together coordinate UDP-N-acetyl-alpha-D-glucosamine. Position 228 (asparagine 228) interacts with Mg(2+). The segment at 231–251 (FELFEADSLWQKRKARDLMLS) is linker. The interval 252–448 (GVTILKPETV…VRLSGNQQKK (197 aa)) is N-acetyltransferase. UDP-N-acetyl-alpha-D-glucosamine contacts are provided by arginine 317 and lysine 335. The active-site Proton acceptor is histidine 347. 2 residues coordinate UDP-N-acetyl-alpha-D-glucosamine: tyrosine 350 and asparagine 361. Acetyl-CoA is bound by residues alanine 364, 370 to 371 (NY), serine 389, serine 407, and arginine 424.

It in the N-terminal section; belongs to the N-acetylglucosamine-1-phosphate uridyltransferase family. This sequence in the C-terminal section; belongs to the transferase hexapeptide repeat family. Homotrimer. Mg(2+) is required as a cofactor.

Its subcellular location is the cytoplasm. The catalysed reaction is alpha-D-glucosamine 1-phosphate + acetyl-CoA = N-acetyl-alpha-D-glucosamine 1-phosphate + CoA + H(+). It carries out the reaction N-acetyl-alpha-D-glucosamine 1-phosphate + UTP + H(+) = UDP-N-acetyl-alpha-D-glucosamine + diphosphate. It participates in nucleotide-sugar biosynthesis; UDP-N-acetyl-alpha-D-glucosamine biosynthesis; N-acetyl-alpha-D-glucosamine 1-phosphate from alpha-D-glucosamine 6-phosphate (route II): step 2/2. Its pathway is nucleotide-sugar biosynthesis; UDP-N-acetyl-alpha-D-glucosamine biosynthesis; UDP-N-acetyl-alpha-D-glucosamine from N-acetyl-alpha-D-glucosamine 1-phosphate: step 1/1. The protein operates within bacterial outer membrane biogenesis; LPS lipid A biosynthesis. Its function is as follows. Catalyzes the last two sequential reactions in the de novo biosynthetic pathway for UDP-N-acetylglucosamine (UDP-GlcNAc). The C-terminal domain catalyzes the transfer of acetyl group from acetyl coenzyme A to glucosamine-1-phosphate (GlcN-1-P) to produce N-acetylglucosamine-1-phosphate (GlcNAc-1-P), which is converted into UDP-GlcNAc by the transfer of uridine 5-monophosphate (from uridine 5-triphosphate), a reaction catalyzed by the N-terminal domain. The sequence is that of Bifunctional protein GlmU from Bartonella quintana (strain Toulouse) (Rochalimaea quintana).